Consider the following 2353-residue polypeptide: Nonribosomal peptide synthetase 7 (2353 aa).

Residues 305–684 (TFSALNTRAN…AIEEVEDSAV (380 aa)) are adenylation 1. The Carrier 1 domain maps to 776–853 (RDLTDSEKVV…QVAAAVQPQP (78 aa)). S813 is subject to O-(pantetheine 4'-phosphoryl)serine. The tract at residues 885–1147 (EDAFPVTPFQ…LMVAPLRVKV (263 aa)) is condensation 1. The adenylation 2 stretch occupies residues 1338 to 1725 (TYAGLAIKMN…QTNVFRQCAV (388 aa)). In terms of domain architecture, Carrier 2 spans 1826-1902 (EICSEAEREL…EQAALMVQGQ (77 aa)). An O-(pantetheine 4'-phosphoryl)serine modification is found at S1863. The condensation 2 stretch occupies residues 1939–2214 (EDIYPCSPGQ…NGNCANFLPY (276 aa)).

Belongs to the NRP synthetase family.

Its function is as follows. Nonribosomal peptide synthesis (NRPS) is a key mechanism responsible for the biosynthesis of bioactive metabolites which are potentially contributing to organismal virulence. This is Nonribosomal peptide synthetase 7 (NRPS7) from Aspergillus fumigatus (strain ATCC MYA-4609 / CBS 101355 / FGSC A1100 / Af293) (Neosartorya fumigata).